The primary structure comprises 689 residues: Glycine--tRNA ligase beta subunit (689 aa).

It belongs to the class-II aminoacyl-tRNA synthetase family. Tetramer of two alpha and two beta subunits.

Its subcellular location is the cytoplasm. It carries out the reaction tRNA(Gly) + glycine + ATP = glycyl-tRNA(Gly) + AMP + diphosphate. This chain is Glycine--tRNA ligase beta subunit, found in Desulforapulum autotrophicum (strain ATCC 43914 / DSM 3382 / VKM B-1955 / HRM2) (Desulfobacterium autotrophicum).